Here is a 130-residue protein sequence, read N- to C-terminus: MAQAQYAGTGRRKNAVARVRLVPGTGKITVNSKDVEEYIPHADLRLVINQPFAVTSTEGSYDVFVNVNGGGYGGQSGAIRHGIARALLQVDPDFRDSLKRAGLLTRDARMVERKKPGLKKARKASQFSKR.

It belongs to the universal ribosomal protein uS9 family.

The protein is Small ribosomal subunit protein uS9 of Streptococcus uberis (strain ATCC BAA-854 / 0140J).